The sequence spans 75 residues: Small integral membrane protein 7 (75 aa).

The N-terminal stretch at 1 to 17 (MIGDILLFGTLLMNAGA) is a signal peptide. At 18–53 (VLNFKLKKKDTQGFGEESKEPSTGDNIREFLLSLRY) the chain is on the extracellular side. Residues 54–74 (FRIFIALWNVFMMLCMIVLFG) traverse the membrane as a helical segment. Residue Ser75 is a topological domain, cytoplasmic.

The protein belongs to the SMIM7 family.

Its subcellular location is the membrane. In Mus musculus (Mouse), this protein is Small integral membrane protein 7 (Smim7).